A 249-amino-acid chain; its full sequence is MEKTLKGIVLNSFDFRDYDKIITIYSNLYGKISLVCLGVNKTKSKNKYAINYLSYSNFEIFKAKNKLGLSKLKRSELINSFSHIATDFNLYVYANVLTSLVMNLEDHMKNYNLFKILKLSIFLINSKPNISFKVCILFMFYFLKIIGNQINLTVCGFCNSKINPIIAISFTNYCSSCKFCYFDDCLIIDNQLKNFINSIVKDDFIASLNQKISNQNLKILTKFVLSYYKDQVGIFTTSMYLLSTINQFK.

The protein belongs to the RecO family.

Its function is as follows. Involved in DNA repair and RecF pathway recombination. The protein is DNA repair protein RecO of Mycoplasma capricolum subsp. capricolum (strain California kid / ATCC 27343 / NCTC 10154).